The following is a 247-amino-acid chain: MNIIPCSIKTLKGLYDISGVEVGQHFYWQIGGFQIHAQVLITSWVVITILLGSVIIAVRNPQTIPTDGQNFFEYVLEFIRDLSKTQIGEEYGPWVPFIGTMFLFIFVSNWSGALLPWKIIQLPHGELAAPTNDINTTVALALLTSAAYFYAGLSNKGLSYFEKYIKPTPILLPINILEDFTKPLSLSFRLFGNILADELVVVVLVSLVPLVVPIPVMFLGLFTSGIQALIFATLAAAYIGESMEGHH.

5 helical membrane-spanning segments follow: residues 38 to 58, 95 to 115, 134 to 154, 199 to 219, and 220 to 240; these read QVLI…IIAV, VPFI…GALL, INTT…AGLS, LVVV…VMFL, and GLFT…AYIG.

Belongs to the ATPase A chain family. In terms of assembly, F-type ATPases have 2 components, CF(1) - the catalytic core - and CF(0) - the membrane proton channel. CF(1) has five subunits: alpha(3), beta(3), gamma(1), delta(1), epsilon(1). CF(0) has four main subunits: a, b, b' and c.

Its subcellular location is the plastid. It is found in the chloroplast thylakoid membrane. Key component of the proton channel; it plays a direct role in the translocation of protons across the membrane. The protein is ATP synthase subunit a, chloroplastic of Oryza nivara (Indian wild rice).